The primary structure comprises 670 residues: UvrABC system protein B (670 aa).

Residues 25-412 form the Helicase ATP-binding domain; sequence EGLEAGLSHQ…AGRVIEQVVR (388 aa). 38 to 45 provides a ligand contact to ATP; sequence GVTGSGKT. The Beta-hairpin motif lies at 91–114; that stretch reads YYDYYQPEAYVPSSDTYIEKDSSI. Residues 429-582 form the Helicase C-terminal domain; it reads QVDDLLSQIR…QIAFNEAHGI (154 aa). A UVR domain is found at 631–666; that stretch reads SKRIRQLEEKMYQLARDLEFEAAAQLRDEIQTLRER.

The protein belongs to the UvrB family. Forms a heterotetramer with UvrA during the search for lesions. Interacts with UvrC in an incision complex.

It localises to the cytoplasm. The UvrABC repair system catalyzes the recognition and processing of DNA lesions. A damage recognition complex composed of 2 UvrA and 2 UvrB subunits scans DNA for abnormalities. Upon binding of the UvrA(2)B(2) complex to a putative damaged site, the DNA wraps around one UvrB monomer. DNA wrap is dependent on ATP binding by UvrB and probably causes local melting of the DNA helix, facilitating insertion of UvrB beta-hairpin between the DNA strands. Then UvrB probes one DNA strand for the presence of a lesion. If a lesion is found the UvrA subunits dissociate and the UvrB-DNA preincision complex is formed. This complex is subsequently bound by UvrC and the second UvrB is released. If no lesion is found, the DNA wraps around the other UvrB subunit that will check the other stand for damage. The protein is UvrABC system protein B of Pseudomonas aeruginosa (strain ATCC 15692 / DSM 22644 / CIP 104116 / JCM 14847 / LMG 12228 / 1C / PRS 101 / PAO1).